A 175-amino-acid polypeptide reads, in one-letter code: uncharacterized protein (175 aa).

This is an uncharacterized protein from Bacillus subtilis (strain 168).